The sequence spans 371 residues: Macronuclear solute carrier homolog CR-MSC (371 aa).

Solcar repeat units lie at residues 16 to 111 (RMNY…FYDK), 120 to 208 (ARPD…CKEN), and 215 to 304 (PHWI…LSQF). The next 6 membrane-spanning stretches (helical) occupy residues 22–42 (FAAA…LDMV), 89–109 (TFFF…GYFY), 126–146 (VAAG…IDIV), 184–204 (AGAN…IYDW), 221–241 (LWGT…FDMI), and 281–301 (FGSF…ICYL).

Belongs to the mitochondrial carrier (TC 2.A.29) family.

It is found in the membrane. This chain is Macronuclear solute carrier homolog CR-MSC, found in Oxytricha fallax.